The following is a 248-amino-acid chain: Granzyme B (248 aa).

Residues 1 to 18 (MKLLLLLLSFSLAPKTEA) form the signal peptide. The propeptide at 19-20 (GE) is activation peptide. The Peptidase S1 domain maps to 21-246 (IIGGHEAKPH…FLSWIKKTMK (226 aa)). Cysteine 50 and cysteine 66 are joined by a disulfide. Active-site charge relay system residues include histidine 65 and aspartate 109. 2 disulfide bridges follow: cysteine 143–cysteine 210 and cysteine 174–cysteine 189. The active-site Charge relay system is the serine 204.

The protein belongs to the peptidase S1 family. Granzyme subfamily.

It is found in the secreted. The protein localises to the cytolytic granule. The catalysed reaction is Preferential cleavage: -Asp-|-Xaa- &gt;&gt; -Asn-|-Xaa- &gt; -Met-|-Xaa-, -Ser-|-Xaa-.. Inactivated by the serine protease inhibitor diisopropylfluorophosphate. Abundant protease in the cytosolic granules of cytotoxic T-cells and NK-cells which activates caspase-independent pyroptosis when delivered into the target cell through the immunological synapse. It cleaves after Asp. Once delivered into the target cell, acts by catalyzing cleavage of gasdermin-E (GSDME), releasing the pore-forming moiety of GSDME, thereby triggering pyroptosis and target cell death. Seems to be linked to an activation cascade of caspases (aspartate-specific cysteine proteases) responsible for apoptosis execution. Cleaves caspase-3 and -9 (CASP3 and CASP9, respectively) to give rise to active enzymes mediating apoptosis. Cleaves and activates CASP7 in response to bacterial infection, promoting plasma membrane repair. The protein is Granzyme B (Gzmb) of Rattus norvegicus (Rat).